Here is a 463-residue protein sequence, read N- to C-terminus: Probable cysteine protease RD21B (463 aa).

A signal peptide spans 1–21; it reads MGFLKLSPMILLLAMIGVSYA. Positions 22–137 are cleaved as a propeptide — activation peptide; that stretch reads MDMSIISYDE…DRYQARVGDA (116 aa). N92 carries N-linked (GlcNAc...) asparagine glycosylation. 5 disulfide bridges follow: C159–C201, C193–C234, C292–C343, C376–C388, and C382–C403. C162 is a catalytic residue. Active-site residues include H298 and N318. The propeptide at 354 to 463 is removed in mature form; sequence KKGQNPPNPG…FWAKSRKHIA (110 aa). N415 carries N-linked (GlcNAc...) asparagine glycosylation.

Belongs to the peptidase C1 family. In terms of assembly, interacts with PRN2. Interacts with WSCP.

Probable thiol protease. This chain is Probable cysteine protease RD21B, found in Arabidopsis thaliana (Mouse-ear cress).